A 299-amino-acid chain; its full sequence is uncharacterized protein (299 aa).

The tract at residues 1-38 (MSLDSNSDTEFELVPKFQTQPTRGDAPKSPELEEVSTV) is disordered.

It belongs to the calycin superfamily. Fatty-acid binding protein (FABP) family.

This is an uncharacterized protein from Caenorhabditis elegans.